Reading from the N-terminus, the 130-residue chain is Small ribosomal subunit protein uS9 (130 aa).

It belongs to the universal ribosomal protein uS9 family.

This is Small ribosomal subunit protein uS9 from Buchnera aphidicola subsp. Acyrthosiphon pisum (strain Tuc7).